The primary structure comprises 355 residues: Guanine nucleotide-binding protein G(q) subunit alpha (355 aa).

Cys-3 is lipidated: S-palmitoyl cysteine. Residues 32-355 (KEIKLLLLGT…QHITEVVPGL (324 aa)) form the G-alpha domain. Residues 35-48 (KLLLLGTGESGKST) are G1 motif. GTP contacts are provided by residues 40-47 (GTGESGKS), 174-180 (LRVRVPT), 199-203 (DVGGQ), 269-272 (NKKD), and Ala-326. Ser-47 and Thr-180 together coordinate Mg(2+). A G2 motif region spans residues 172-180 (DVLRVRVPT). A G3 motif region spans residues 195–204 (FKMVDVGGQR). The G4 motif stretch occupies residues 265–272 (ILFLNKKD). A G5 motif region spans residues 324–329 (TCATDT).

The protein belongs to the G-alpha family. G(q) subfamily. G proteins are composed of 3 units; alpha, beta and gamma. The alpha chain contains the guanine nucleotide binding site.

In terms of biological role, guanine nucleotide-binding proteins (G proteins) are involved as modulators or transducers in various transmembrane signaling systems. This Geodia cydonium (Sponge) protein is Guanine nucleotide-binding protein G(q) subunit alpha.